Reading from the N-terminus, the 202-residue chain is MPIGVPKVPFRSPGEEDAVWVDVYNRLHRERLLFLGQEVDSEISNQLVGLMVYLTIEDDTKDLYLFINSPGGWVIPGIAIYDTMQFVSPDVHTICMGLAASMGSFILVGGEITKRLAFPHARVMIHQPASSFYEAPTGEFILEAEELLKLRETLTRVYVQRTGNPLWVVSEDMERDVFMSATEAQAHGIVDLVAIENTGDSA.

Ser101 (nucleophile) is an active-site residue. His126 is a catalytic residue.

Belongs to the peptidase S14 family. In terms of assembly, component of the chloroplastic Clp protease core complex.

The protein resides in the plastid. Its subcellular location is the chloroplast stroma. The catalysed reaction is Hydrolysis of proteins to small peptides in the presence of ATP and magnesium. alpha-casein is the usual test substrate. In the absence of ATP, only oligopeptides shorter than five residues are hydrolyzed (such as succinyl-Leu-Tyr-|-NHMec, and Leu-Tyr-Leu-|-Tyr-Trp, in which cleavage of the -Tyr-|-Leu- and -Tyr-|-Trp bonds also occurs).. Functionally, cleaves peptides in various proteins in a process that requires ATP hydrolysis. Has a chymotrypsin-like activity. Plays a major role in the degradation of misfolded proteins. The polypeptide is ATP-dependent Clp protease proteolytic subunit (Calycanthus floridus var. glaucus (Eastern sweetshrub)).